Consider the following 165-residue polypeptide: Crossover junction endodeoxyribonuclease RuvC (165 aa).

Residues D7, E67, and D140 contribute to the active site. The Mg(2+) site is built by D7, E67, and D140.

This sequence belongs to the RuvC family. In terms of assembly, homodimer which binds Holliday junction (HJ) DNA. The HJ becomes 2-fold symmetrical on binding to RuvC with unstacked arms; it has a different conformation from HJ DNA in complex with RuvA. In the full resolvosome a probable DNA-RuvA(4)-RuvB(12)-RuvC(2) complex forms which resolves the HJ. Requires Mg(2+) as cofactor.

It localises to the cytoplasm. The catalysed reaction is Endonucleolytic cleavage at a junction such as a reciprocal single-stranded crossover between two homologous DNA duplexes (Holliday junction).. Functionally, the RuvA-RuvB-RuvC complex processes Holliday junction (HJ) DNA during genetic recombination and DNA repair. Endonuclease that resolves HJ intermediates. Cleaves cruciform DNA by making single-stranded nicks across the HJ at symmetrical positions within the homologous arms, yielding a 5'-phosphate and a 3'-hydroxyl group; requires a central core of homology in the junction. The consensus cleavage sequence is 5'-(A/T)TT(C/G)-3'. Cleavage occurs on the 3'-side of the TT dinucleotide at the point of strand exchange. HJ branch migration catalyzed by RuvA-RuvB allows RuvC to scan DNA until it finds its consensus sequence, where it cleaves and resolves the cruciform DNA. This is Crossover junction endodeoxyribonuclease RuvC from Desulfitobacterium hafniense (strain DSM 10664 / DCB-2).